A 158-amino-acid polypeptide reads, in one-letter code: Transcriptional repressor NrdR (158 aa).

Residues 3–34 (CPSCQNTDSRVLESRAADGGRSVRRRRECLNC) fold into a zinc finger. Residues 49–139 (ITVIKRDGCR…VYRQFRGIDD (91 aa)) form the ATP-cone domain.

Belongs to the NrdR family. Requires Zn(2+) as cofactor.

Functionally, negatively regulates transcription of bacterial ribonucleotide reductase nrd genes and operons by binding to NrdR-boxes. This chain is Transcriptional repressor NrdR, found in Synechococcus sp. (strain CC9902).